Here is a 416-residue protein sequence, read N- to C-terminus: Putative L-glutamine:3-amino-2,3-dideoxy-scyllo-inosose aminotransferase (416 aa).

K199 carries the post-translational modification N6-(pyridoxal phosphate)lysine.

It belongs to the DegT/DnrJ/EryC1 family. L-glutamine:2-deoxy-scyllo-inosose/scyllo-inosose aminotransferase subfamily. Pyridoxal 5'-phosphate is required as a cofactor.

The enzyme catalyses 3-amino-2,3-dideoxy-scyllo-inosose + L-glutamine = 2-deoxystreptamine + 2-oxoglutaramate. It functions in the pathway metabolic intermediate biosynthesis; 2-deoxystreptamine biosynthesis; 2-deoxystreptamine from D-glucose 6-phosphate: step 4/4. It participates in antibiotic biosynthesis; tobramycin biosynthesis. Its function is as follows. Catalyzes the transamination of 3-amino-2,3-dideoxy-scyllo-inosose (amino-DOI) into 2-deoxystreptamine (DOS). In Streptoalloteichus tenebrarius (strain ATCC 17920 / DSM 40477 / JCM 4838 / CBS 697.72 / NBRC 16177 / NCIMB 11028 / NRRL B-12390 / A12253. 1 / ISP 5477) (Streptomyces tenebrarius), this protein is Putative L-glutamine:3-amino-2,3-dideoxy-scyllo-inosose aminotransferase (tobS2).